A 386-amino-acid polypeptide reads, in one-letter code: Succinate--CoA ligase [ADP-forming] subunit beta (386 aa).

The ATP-grasp domain maps to 9 to 244 (KEILRKYGVP…HDEEDPLETR (236 aa)). Residues lysine 46, 53-55 (GRG), glutamate 99, cysteine 102, and glutamate 107 contribute to the ATP site. Asparagine 199 and aspartate 213 together coordinate Mg(2+). Residues asparagine 264 and 321–323 (GIM) each bind substrate.

The protein belongs to the succinate/malate CoA ligase beta subunit family. Heterotetramer of two alpha and two beta subunits. Mg(2+) serves as cofactor.

It catalyses the reaction succinate + ATP + CoA = succinyl-CoA + ADP + phosphate. The enzyme catalyses GTP + succinate + CoA = succinyl-CoA + GDP + phosphate. It participates in carbohydrate metabolism; tricarboxylic acid cycle; succinate from succinyl-CoA (ligase route): step 1/1. In terms of biological role, succinyl-CoA synthetase functions in the citric acid cycle (TCA), coupling the hydrolysis of succinyl-CoA to the synthesis of either ATP or GTP and thus represents the only step of substrate-level phosphorylation in the TCA. The beta subunit provides nucleotide specificity of the enzyme and binds the substrate succinate, while the binding sites for coenzyme A and phosphate are found in the alpha subunit. The polypeptide is Succinate--CoA ligase [ADP-forming] subunit beta (Rickettsia felis (strain ATCC VR-1525 / URRWXCal2) (Rickettsia azadi)).